Consider the following 508-residue polypeptide: MLTFFFLWISTLLLSSFIVYLLYRRRSAQCPPLPPGPNGWPILGNLPQLGAKPHQTLDALSKQYGPLFRLRLGSVNVVVASSSAVAAQFLRTHDVNFSNRPPNSGAEHVAYNYQDLVFAPYGPRWRMLRKLCSVHLFSLKALDDLRPVRQGEVACLVRNLRRHADTGVLVNLGKALNVCATNALARAMLGRRVFADEDAQLAEADEFKEMVVELMRLAGVFNVGDFVPGLGWLDLQGVVGKMKRLHRRYDAFLDRVIEENQANAKSGDLLSVLIRLKEADAEGEIKLNNTDIKALLLNLFTAGTDTSSSTVEWVLAELIRHPDILQKTQHELDSVIGRDRLVAESDLPNLPYLQAVVKETFRLHPSTPLSLPRMASEECIVNGYKIPKHATLLVNVWSIGRDAAVWNDPLEFRPSRFLPGGEREHVDVKGNDFEVIPFGAGRRICAGLSLGLRMVQFMTATIVHAYDWSLPKGQECQKLDMEEAYGLTLQRAVPLMVQPIPRLSHKAY.

Residues 2–22 form a helical membrane-spanning segment; that stretch reads LTFFFLWISTLLLSSFIVYLL. C445 contributes to the heme binding site.

The protein belongs to the cytochrome P450 family. Heme serves as cofactor. Expressed in young cromes.

The protein localises to the membrane. The enzyme catalyses a 3'-unsubstituted flavone + reduced [NADPH--hemoprotein reductase] + O2 = a 3'-hydroxyflavone + oxidized [NADPH--hemoprotein reductase] + H2O + H(+). It carries out the reaction (2S)-naringenin + reduced [NADPH--hemoprotein reductase] + O2 = (S)-eriodictyol + oxidized [NADPH--hemoprotein reductase] + H2O + H(+). It catalyses the reaction (2R,3R)-dihydrokaempferol + reduced [NADPH--hemoprotein reductase] + O2 = (2R,3R)-dihydroquercetin + oxidized [NADPH--hemoprotein reductase] + H2O + H(+). The catalysed reaction is kaempferol + reduced [NADPH--hemoprotein reductase] + O2 = quercetin + oxidized [NADPH--hemoprotein reductase] + H2O + H(+). Its pathway is flavonoid metabolism. Functionally, flavonoid 3'-hydroxylase that catalyzes the 3'-hydroxylation of flavanones, dihydroflavonols and flavonols. Converts narigenin to eriodictyol, dihydrokaempferol to dihydroquercetin and kaempferol to quercetin. This is Flavonoid 3'-monooxygenase CYP75B137 from Crocosmia x crocosmiiflora (Montbretia).